Reading from the N-terminus, the 189-residue chain is ADP-ribosylation factor H (189 aa).

GTP-binding positions include 34–40, 75–79, and 134–137; these read DGAGKST, DVGGQ, and NKQD.

This sequence belongs to the small GTPase superfamily. Arf family.

Its subcellular location is the golgi apparatus. Functionally, GTP-binding protein that may be involved in protein trafficking. May modulate vesicle budding and uncoating within the Golgi apparatus. This is ADP-ribosylation factor H (arrH) from Dictyostelium discoideum (Social amoeba).